Reading from the N-terminus, the 448-residue chain is Ribosomal protein uS12 methylthiotransferase RimO (448 aa).

The MTTase N-terminal domain occupies 7–123 (EKVSLVSLGC…IAEIIAEKKQ (117 aa)). [4Fe-4S] cluster-binding residues include cysteine 16, cysteine 52, cysteine 86, cysteine 161, cysteine 165, and cysteine 168. Positions 147–377 (SSPHYTAYLK…MRTQARVSFK (231 aa)) constitute a Radical SAM core domain. The 69-residue stretch at 380 to 448 (RTLVDSEEDV…DYDLIGEIVD (69 aa)) folds into the TRAM domain.

The protein belongs to the methylthiotransferase family. RimO subfamily. [4Fe-4S] cluster is required as a cofactor.

It is found in the cytoplasm. It carries out the reaction L-aspartate(89)-[ribosomal protein uS12]-hydrogen + (sulfur carrier)-SH + AH2 + 2 S-adenosyl-L-methionine = 3-methylsulfanyl-L-aspartate(89)-[ribosomal protein uS12]-hydrogen + (sulfur carrier)-H + 5'-deoxyadenosine + L-methionine + A + S-adenosyl-L-homocysteine + 2 H(+). Catalyzes the methylthiolation of an aspartic acid residue of ribosomal protein uS12. The sequence is that of Ribosomal protein uS12 methylthiotransferase RimO from Citrifermentans bemidjiense (strain ATCC BAA-1014 / DSM 16622 / JCM 12645 / Bem) (Geobacter bemidjiensis).